Reading from the N-terminus, the 1025-residue chain is Adenylate-forming reductase 03009 (1025 aa).

An adenylation (A) domain region spans residues 38–422 (FEFHAKSNPQ…LGRIDNQVKI (385 aa)). Residues 332–333 (VT) and 412–415 (HLGR) each bind AMP. The tract at residues 556 to 638 (SLGSTNTKIS…AILIWICVKK (83 aa)) is thiolation and peptide carrier (T) domain. Residues 682-900 (FIRRTAARVY…PPTKLWVKGV (219 aa)) form a thioester reductase (TR) domain region. Residues 685–688 (RTAA), 769–771 (SAL), and Tyr-840 each bind NADP(+).

Belongs to the adenylate-forming reductase family.

Functionally, adenylate-forming reductase, a natural product biosynthesis enzyme that resembles non-ribosomal peptide synthetases, yet serves to modify one substrate, rather than to condense two or more building blocks. The A-domain preferentially accepts L-serine, L-alanine and L-valine as substrates. The natural product of the enzyme is not yet known. This is Adenylate-forming reductase 03009 from Coprinopsis cinerea (strain Okayama-7 / 130 / ATCC MYA-4618 / FGSC 9003) (Inky cap fungus).